The sequence spans 273 residues: DnaJ homolog subfamily C member 27 (273 aa).

Positions 1-18 (MESNVPKRKEPLKSLRIK) are required for interaction with MAPK1. Residues 23 to 30 (GNAEVGKS), 71 to 75 (DMAGH), and 134 to 137 (NKID) each bind GTP. In terms of domain architecture, J spans 217–273 (DSWEMLGVRPGASREEVNKAYRKLAVLLHPDKCVAPGSEDAFKAVVNARTALLKNIK).

The protein belongs to the small GTPase superfamily. Rab family. In terms of assembly, interacts directly with MAPK1 (wild-type and kinase-deficient forms). Interacts directly (in GTP-bound form) with MAP2K1 (wild-type and kinase-deficient forms).

It is found in the nucleus. In terms of biological role, GTPase which can activate the MEK/ERK pathway and induce cell transformation when overexpressed. May act as a nuclear scaffold for MAPK1, probably by association with MAPK1 nuclear export signal leading to enhanced ERK1/ERK2 signaling. The polypeptide is DnaJ homolog subfamily C member 27 (Dnajc27) (Rattus norvegicus (Rat)).